We begin with the raw amino-acid sequence, 363 residues long: 3-isopropylmalate dehydrogenase (363 aa).

78-91 (GPKWEHLPPAEQPE) serves as a coordination point for NAD(+). Positions 99, 109, 138, and 227 each coordinate substrate. Residues aspartate 227, aspartate 251, and aspartate 255 each contribute to the Mg(2+) site. Residue 285-297 (GSAPDIAGKNIAN) coordinates NAD(+).

The protein belongs to the isocitrate and isopropylmalate dehydrogenases family. LeuB type 1 subfamily. As to quaternary structure, homodimer. Mg(2+) serves as cofactor. Mn(2+) is required as a cofactor.

The protein localises to the cytoplasm. The catalysed reaction is (2R,3S)-3-isopropylmalate + NAD(+) = 4-methyl-2-oxopentanoate + CO2 + NADH. The protein operates within amino-acid biosynthesis; L-leucine biosynthesis; L-leucine from 3-methyl-2-oxobutanoate: step 3/4. Its function is as follows. Catalyzes the oxidation of 3-carboxy-2-hydroxy-4-methylpentanoate (3-isopropylmalate) to 3-carboxy-4-methyl-2-oxopentanoate. The product decarboxylates to 4-methyl-2 oxopentanoate. The protein is 3-isopropylmalate dehydrogenase of Yersinia pestis.